A 392-amino-acid chain; its full sequence is Formate-dependent phosphoribosylglycinamide formyltransferase (392 aa).

N(1)-(5-phospho-beta-D-ribosyl)glycinamide-binding positions include 22–23 (EL) and E82. Residues R114, K155, 160-165 (SSGKGQ), 195-198 (EGVV), and E203 each bind ATP. Positions 119-308 (RLAAEELQLP…EFALHVRAFL (190 aa)) constitute an ATP-grasp domain. Mg(2+) contacts are provided by E267 and E279. N(1)-(5-phospho-beta-D-ribosyl)glycinamide contacts are provided by residues D286, K355, and 362-363 (RR).

The protein belongs to the PurK/PurT family. As to quaternary structure, homodimer.

The enzyme catalyses N(1)-(5-phospho-beta-D-ribosyl)glycinamide + formate + ATP = N(2)-formyl-N(1)-(5-phospho-beta-D-ribosyl)glycinamide + ADP + phosphate + H(+). The protein operates within purine metabolism; IMP biosynthesis via de novo pathway; N(2)-formyl-N(1)-(5-phospho-D-ribosyl)glycinamide from N(1)-(5-phospho-D-ribosyl)glycinamide (formate route): step 1/1. Its function is as follows. Involved in the de novo purine biosynthesis. Catalyzes the transfer of formate to 5-phospho-ribosyl-glycinamide (GAR), producing 5-phospho-ribosyl-N-formylglycinamide (FGAR). Formate is provided by PurU via hydrolysis of 10-formyl-tetrahydrofolate. The sequence is that of Formate-dependent phosphoribosylglycinamide formyltransferase from Escherichia coli O1:K1 / APEC.